Consider the following 183-residue polypeptide: 1,6-anhydro-N-acetylmuramyl-L-alanine amidase AmpD (183 aa).

Positions 30 to 167 (LLVVHNISLP…APDRKTDPGP (138 aa)) constitute an N-acetylmuramoyl-L-alanine amidase domain. His-34 is a Zn(2+) binding site. Glu-116 serves as the catalytic Proton acceptor. Positions 154 and 164 each coordinate Zn(2+).

The protein belongs to the N-acetylmuramoyl-L-alanine amidase 2 family. Requires Zn(2+) as cofactor.

The protein localises to the cytoplasm. It catalyses the reaction Hydrolyzes the link between N-acetylmuramoyl residues and L-amino acid residues in certain cell-wall glycopeptides.. In terms of biological role, involved in cell wall peptidoglycan recycling. Specifically cleaves the amide bond between the lactyl group of N-acetylmuramic acid and the alpha-amino group of the L-alanine in degradation products containing an anhydro N-acetylmuramyl moiety. Is also involved in beta-lactamase induction. The chain is 1,6-anhydro-N-acetylmuramyl-L-alanine amidase AmpD (ampD) from Escherichia coli (strain K12).